The chain runs to 234 residues: MANVALLGCTGMVGSHILTHLLGNSSVARIDTISRRTPQPATAAPQEKLTTFVSDDSSKWASQLSSLTPTPDIFISAFGTTRGAAGGFENQYKIEHGLNVEMARAARDAGTKVYVLISSTGADKNSSFGYPRMKGEIEEEVKAMGFDRTIILRPGLISGERQESRPAEAVMRGFAGLVGKIHSGLKDGWAQDADVIAKAAVNAGVKALNGEVPAGSEKVWVMYGKDIIQYGKGQ.

The transit peptide at 1–36 (MANVALLGCTGMVGSHILTHLLGNSSVARIDTISRR) directs the protein to the mitochondrion.

Belongs to the FMP52 family.

The protein resides in the mitochondrion outer membrane. This is Protein fmp52, mitochondrial (fmp52) from Aspergillus niger (strain ATCC MYA-4892 / CBS 513.88 / FGSC A1513).